The chain runs to 217 residues: Neuron-specific vesicular protein calcyon (217 aa).

The interval 1-25 (MVKLGCSFSGKPGKDPGDQDGAAMD) is disordered. The Extracellular portion of the chain corresponds to 1–87 (MVKLGCSFSG…EEGRRLPTAR (87 aa)). Residue Asn-73 is glycosylated (N-linked (GlcNAc...) asparagine). The helical transmembrane segment at 88–108 (MIAFAMALLGCVLIMYKAIWY) threads the bilayer. Residues 109 to 217 (DQFTCPDGFL…AGSAAPPPAQ (109 aa)) are Cytoplasmic-facing. The interval 162–217 (PAAWGDGYRAAKEERKGPTQAGAAAAATEPPGKPSAKAEKEAARKAAGSAAPPPAQ) is disordered.

This sequence belongs to the NSG family. In terms of assembly, interacts with CLTA. Post-translationally, glycosylated. In terms of tissue distribution, expressed in the pyramidal cells of the prefrontal cortex, in hypothalamus and in caudate nucleus. No expression in spleen. Up-regulated in the prefrontal cortex of schizophrenic patients with nearly twice the levels of non-schizophrenics.

Its subcellular location is the cytoplasmic vesicle membrane. It is found in the cell membrane. Interacts with clathrin light chain A and stimulates clathrin self-assembly and clathrin-mediated endocytosis. The sequence is that of Neuron-specific vesicular protein calcyon (CALY) from Homo sapiens (Human).